Reading from the N-terminus, the 179-residue chain is Ubiquitin-conjugating enzyme E2 C (179 aa).

The segment at 1–31 is disordered; sequence MASQNRDPVAASVAAARKGAEPSGGAARGPV. At Ala2 the chain carries N-acetylalanine. Ser3 is modified (phosphoserine). The UBC core domain occupies 30–175; sequence PVGKRLQQEL…LQETYSKQVS (146 aa). Catalysis depends on Cys114, which acts as the Glycyl thioester intermediate.

Belongs to the ubiquitin-conjugating enzyme family. As to quaternary structure, component of the APC/C complex, composed of at least 14 distinct subunits that assemble into a complex of at least 19 chains with a combined molecular mass of around 1.2 MDa. Within this complex, directly interacts with ANAPC2. Post-translationally, autoubiquitinated by the APC/C complex, leading to its degradation by the proteasome. Its degradation plays a central role in APC/C regulation, allowing cyclin-A accumulation before S phase entry. APC/C substrates inhibit the autoubiquitination of UBE2C/UBCH10 but not its E2 function, hence APC/C remaining active until its substrates have been destroyed.

It catalyses the reaction S-ubiquitinyl-[E1 ubiquitin-activating enzyme]-L-cysteine + [E2 ubiquitin-conjugating enzyme]-L-cysteine = [E1 ubiquitin-activating enzyme]-L-cysteine + S-ubiquitinyl-[E2 ubiquitin-conjugating enzyme]-L-cysteine.. It carries out the reaction S-ubiquitinyl-[E1 ubiquitin-activating enzyme]-L-cysteine + [acceptor protein]-L-lysine = [E1 ubiquitin-activating enzyme]-L-cysteine + N(6)-monoubiquitinyl-[acceptor protein]-L-lysine.. It participates in protein modification; protein ubiquitination. Its function is as follows. Accepts ubiquitin from the E1 complex and catalyzes its covalent attachment to other proteins. In vitro catalyzes 'Lys-11'- and 'Lys-48'-linked polyubiquitination. Acts as an essential factor of the anaphase promoting complex/cyclosome (APC/C), a cell cycle-regulated ubiquitin ligase that controls progression through mitosis. Acts by initiating 'Lys-11'-linked polyubiquitin chains on APC/C substrates, leading to the degradation of APC/C substrates by the proteasome and promoting mitotic exit. This Bos taurus (Bovine) protein is Ubiquitin-conjugating enzyme E2 C (UBE2C).